The following is a 1090-amino-acid chain: MSKRKSISTHDKSTKRARPVEEEEDSEDADDRDQDVERLSPQVLPSGDVSDVGIVKSITLNNFMCHANLGPFAFGSNVNFIVGKNGSGKSAILTGLIVALGGNAQATNRGSSLKGFVKEGESFAVVSITLNNIGKDAYKPEVYGQAIVIDQKITREGIRTYKLKSQSGHIISTKKEDLVTILDYYNIQVNNPVTILTQEMSKYFLHSKGGAEKYKFFMKATQLEQMKDDFVHIKSTKSVTVDKVEQHSECLKDLKRDYLEKEDRYKSLASVNEMYTKLEELKKQMAWALVGEVEKEFEPMKEKLESDRCATNKFNEKVDEWKKKVEVAEGKQKQSHEQLEEITQQVSELQSKCTEFKTEVQRRNADLKSCEVTVHRHKAILRDLEKDKAQLSSKINDLSLSISQATGAESQARMERIAQIEAALEDLTHHTSTLGQQIEQYQHSYRHAIEGQGKMKRELEGLQKSIDANRRQLQSMESSRSNRLQRFGDQMPALLAAIDEAHKKGQFKHRPRGPLGYLISLKDPELALSIEICLKNLVQAFTCDNYDDERVLKSLMTKVLQHGRRPAIITSRFFPKVHDVSVRAVNHPDYPSVLQALEIEDPVVANCLIDQRAIECILLIKNRTEARRVMQGRNPPQNCTSAFSVEGDQIFTNRSYTADQTRANFLSKDVEEGIRHLKREMETQKVQAAHIQQQIRSTDKNISENQDLLRRTQTEQKTTEVKTMKLQLELTDLKNVEEPQSEDLAELKSAFENAEQEYKQHKQLIDTAAEEADVKKVETKLTPLFTSLSCNILWVHCLFVLLQEELSKTDQEVMKCKHHEKHYEERRNAHLCSIKTLENNVASKEKELQESIAKAKEICPEQLVVRRTARSLDVEITRLKVKIATQREHQGDREEIVREYHEALESYANKAQQIKNLNNFIKCLDRVMDQRLYAYTVLRRFLSARCKYYFDSMLAQRGFTGNMTFDHKNETLSISVQPGQGNKADLNDMRCLSGGERSFSTVCFVLSLWPITEAPFRCLDEFDVYMDMANRRNTQRQSGLKMATSQKIRQLIFLTPQSMSSLPECRRIHIVQLNDPVHGQTQMEQEEEGP.

The interval 1–44 (MSKRKSISTHDKSTKRARPVEEEEDSEDADDRDQDVERLSPQVL) is disordered. Residues 8-20 (STHDKSTKRARPV) show a composition bias toward basic and acidic residues. Over residues 21–34 (EEEEDSEDADDRDQ) the composition is skewed to acidic residues. Position 83–90 (83–90 (GKNGSGKS)) interacts with ATP. Residues 242–479 (DKVEQHSECL…RRQLQSMESS (238 aa)) adopt a coiled-coil conformation. The interval 480-667 (RSNRLQRFGD…ADQTRANFLS (188 aa)) is flexible hinge. Coiled-coil stretches lie at residues 668–858 (KDVE…AKEI) and 894–919 (EEIV…NLNN).

Belongs to the SMC family. SMC6 subfamily. Forms a heterodimer with smc5. Component of the SMC5-SMC6 complex which consists at least of smc5, smc6, nsmce2, nsmce1 and nsmce4a.

It localises to the nucleus. Its subcellular location is the chromosome. The protein localises to the telomere. Functionally, core component of the SMC5-SMC6 complex, a complex involved in repair of DNA double-strand breaks by homologous recombination. The complex may promote sister chromatid homologous recombination by recruiting the SMC1-SMC3 cohesin complex to double-strand breaks. The complex is required for telomere maintenance via recombination and mediates sumoylation of shelterin complex (telosome) components. This chain is Structural maintenance of chromosomes protein 6 (smc6), found in Takifugu rubripes (Japanese pufferfish).